Consider the following 494-residue polypeptide: Cytochrome P450 2A5 (494 aa).

Ser-131 carries the phosphoserine modification. Lys-379 carries the post-translational modification N6-acetyllysine. Residue Cys-439 participates in heme binding.

This sequence belongs to the cytochrome P450 family. The cofactor is heme. In terms of tissue distribution, liver, with a strong circadian rhythmicity. Circadian expression is regulated by DBP.

It localises to the endoplasmic reticulum membrane. The protein resides in the microsome membrane. The catalysed reaction is an organic molecule + reduced [NADPH--hemoprotein reductase] + O2 = an alcohol + oxidized [NADPH--hemoprotein reductase] + H2O + H(+). In terms of biological role, exhibits a high coumarin 7-hydroxylase activity. The protein is Cytochrome P450 2A5 (Cyp2a5) of Mus musculus (Mouse).